We begin with the raw amino-acid sequence, 335 residues long: Ornithine carbamoyltransferase 2, catabolic (335 aa).

Residues 62-65 (STRT), Gln89, Arg113, and 140-143 (HPTQ) contribute to the carbamoyl phosphate site. Residues Asn172, Asp236, and 240–241 (SM) contribute to the L-ornithine site. Carbamoyl phosphate is bound by residues 277–278 (CL) and Arg322.

Belongs to the aspartate/ornithine carbamoyltransferase superfamily. OTCase family.

The protein resides in the cytoplasm. The catalysed reaction is carbamoyl phosphate + L-ornithine = L-citrulline + phosphate + H(+). The protein operates within amino-acid degradation; L-arginine degradation via ADI pathway; carbamoyl phosphate from L-arginine: step 2/2. In terms of biological role, reversibly catalyzes the transfer of the carbamoyl group from carbamoyl phosphate (CP) to the N(epsilon) atom of ornithine (ORN) to produce L-citrulline. The polypeptide is Ornithine carbamoyltransferase 2, catabolic (arcB2) (Staphylococcus epidermidis (strain ATCC 12228 / FDA PCI 1200)).